A 44-amino-acid chain; its full sequence is Alpha-amylase inhibitor magnificamide (44 aa).

3 cysteine pairs are disulfide-bonded: cysteine 6/cysteine 38, cysteine 16/cysteine 33, and cysteine 20/cysteine 39. An inhibitory motif region spans residues 7–10; the sequence is YIYH.

Belongs to the sea anemone alpha-amylase inhibitor family.

Its subcellular location is the secreted. In terms of biological role, mammalian alpha-amylase (AMY2A) inhibitor. The recombinant peptide inhibits porcine pancreatic (Ki=0.17 nM) and human saliva alpha-amylases (Ki=7.7 nM). It does not show antimicrobial (tested on fungi and bacteria) or channel modulating activities (tested on 18 voltage-gated sodium and potassium channles). This is Alpha-amylase inhibitor magnificamide from Heteractis magnifica (Magnificent sea anemone).